A 604-amino-acid polypeptide reads, in one-letter code: Serine protease 56 (604 aa).

An N-terminal signal peptide occupies residues 1 to 22 (MPLAMLLLLLLLLSPDSQTAHG). The disordered stretch occupies residues 70–94 (CQGPGRPRPQAPLLQDPPEPVQCGE). Residues 75 to 89 (RPRPQAPLLQDPPEP) show a composition bias toward pro residues. N-linked (GlcNAc...) asparagine glycosylation is present at Asn101. In terms of domain architecture, Peptidase S1 spans 109–341 (IVGGSTAPSG…FKDWLQEQMS (233 aa)). The cysteines at positions 134 and 150 are disulfide-linked. Residues His149 and Asp195 each act as charge relay system in the active site. Cystine bridges form between Cys229-Cys296, Cys260-Cys275, and Cys286-Cys317. The Charge relay system role is filled by Ser290. Disordered regions lie at residues 424–452 (RPGLRRGVSAPARSAPSLQELPGHNPREQ) and 578–604 (PQAPWIGADQGQRLGKERQGQLQPPVP).

It belongs to the peptidase S1 family. As to expression, expressed in the eye: present in the retina and in the optic nerve.

Its subcellular location is the endoplasmic reticulum membrane. Serine protease required during eye development. In Mus musculus (Mouse), this protein is Serine protease 56 (Prss56).